Consider the following 534-residue polypeptide: NAD(P)H-quinone oxidoreductase chain 4 2 (534 aa).

14 consecutive transmembrane segments (helical) span residues 9–29 (FPWLTTVIAYPVLAALFIPLI), 51–71 (WFALFIAVTDLLILLAGFYVG), 106–126 (LILLTAFITTLAILAAWPVTL), 130–150 (LFYFLMLAMYGGQIGVFAVQD), 152–172 (LLFFLMWELELIPVYLLLSIW), 184–204 (FILYTALSSLFILVAGLAMAF), 227–247 (LLMYGAFLIAYGVKLPIFPLH), 258–278 (TAPVHMLLAGILLKMGGYALM), 290–310 (LYFAPVLIVLGVVNIIFAALT), 326–346 (ISHMGFVLIGIGSLTEIGMSG), 347–367 (AMLQMISHGLIGASLFFLVGA), 399–419 (LASLALPGMSGFVAEIMVFIG), 432–452 (LVVVFLAAVGVILTPIYLLSM), and 479–499 (VFIIACLLIPIIGIGLYPKLV).

Belongs to the complex I subunit 4 family.

The protein localises to the cellular thylakoid membrane. The catalysed reaction is a plastoquinone + NADH + (n+1) H(+)(in) = a plastoquinol + NAD(+) + n H(+)(out). It carries out the reaction a plastoquinone + NADPH + (n+1) H(+)(in) = a plastoquinol + NADP(+) + n H(+)(out). In terms of biological role, NDH-1 shuttles electrons from NAD(P)H, via FMN and iron-sulfur (Fe-S) centers, to quinones in the respiratory chain. The immediate electron acceptor for the enzyme in this species is believed to be plastoquinone. Couples the redox reaction to proton translocation (for every two electrons transferred, four hydrogen ions are translocated across the cytoplasmic membrane), and thus conserves the redox energy in a proton gradient. The polypeptide is NAD(P)H-quinone oxidoreductase chain 4 2 (Synechococcus sp. (strain JA-2-3B'a(2-13)) (Cyanobacteria bacterium Yellowstone B-Prime)).